Consider the following 271-residue polypeptide: Protein PXR1 (271 aa).

The region spanning 25 to 72 (TSRFGHQFLEKFGWKPGMGLGLSPMNSNTSHIKVSIKDDNVGLGAKLK) is the G-patch domain. The tract at residues 147 to 239 (SNAKKRKREG…SASNIPDAVN (93 aa)) is disordered. The span at 157 to 168 (DDSEDEDDDDKE) shows a compositional bias: acidic residues. Over residues 175 to 203 (KKHKKHKKHKKDKKKDKKDKKEHKKHKKE) the composition is skewed to basic residues. Positions 204-221 (EKRLKKEKRAEKTKETKK) are enriched in basic and acidic residues. Ser-230 carries the post-translational modification Phosphoserine.

It belongs to the PINX1 family. In terms of assembly, interacts with EST2.

The protein resides in the nucleus. It localises to the nucleolus. Functionally, involved in rRNA-processing at A0, A1 and A2 sites through its action in U18 and U24 snoRNA 3'-end final trimming. Negative regulator of telomerase through competition for binding to EST2 with TLC1. This is Protein PXR1 (PXR1) from Saccharomyces cerevisiae (strain ATCC 204508 / S288c) (Baker's yeast).